Here is a 101-residue protein sequence, read N- to C-terminus: Phosphoribosyl-AMP cyclohydrolase (101 aa).

D71 contributes to the Mg(2+) binding site. C72 lines the Zn(2+) pocket. Residues D73 and D75 each contribute to the Mg(2+) site. Zn(2+)-binding residues include C88 and C95.

Belongs to the PRA-CH family. Homodimer. Requires Mg(2+) as cofactor. Zn(2+) serves as cofactor.

The protein localises to the cytoplasm. The catalysed reaction is 1-(5-phospho-beta-D-ribosyl)-5'-AMP + H2O = 1-(5-phospho-beta-D-ribosyl)-5-[(5-phospho-beta-D-ribosylamino)methylideneamino]imidazole-4-carboxamide. Its pathway is amino-acid biosynthesis; L-histidine biosynthesis; L-histidine from 5-phospho-alpha-D-ribose 1-diphosphate: step 3/9. Catalyzes the hydrolysis of the adenine ring of phosphoribosyl-AMP. This is Phosphoribosyl-AMP cyclohydrolase from Bacillus cereus (strain AH187).